A 393-amino-acid polypeptide reads, in one-letter code: UDP-N-acetylglucosamine--N-acetylmuramyl-(pentapeptide) pyrophosphoryl-undecaprenol N-acetylglucosamine transferase (393 aa).

UDP-N-acetyl-alpha-D-glucosamine contacts are provided by residues 14–16, Asn-128, Arg-170, Ser-210, and Gln-321; that span reads TAG.

It belongs to the glycosyltransferase 28 family. MurG subfamily.

Its subcellular location is the cell membrane. It catalyses the reaction di-trans,octa-cis-undecaprenyl diphospho-N-acetyl-alpha-D-muramoyl-L-alanyl-D-glutamyl-meso-2,6-diaminopimeloyl-D-alanyl-D-alanine + UDP-N-acetyl-alpha-D-glucosamine = di-trans,octa-cis-undecaprenyl diphospho-[N-acetyl-alpha-D-glucosaminyl-(1-&gt;4)]-N-acetyl-alpha-D-muramoyl-L-alanyl-D-glutamyl-meso-2,6-diaminopimeloyl-D-alanyl-D-alanine + UDP + H(+). The protein operates within cell wall biogenesis; peptidoglycan biosynthesis. Functionally, cell wall formation. Catalyzes the transfer of a GlcNAc subunit on undecaprenyl-pyrophosphoryl-MurNAc-pentapeptide (lipid intermediate I) to form undecaprenyl-pyrophosphoryl-MurNAc-(pentapeptide)GlcNAc (lipid intermediate II). This chain is UDP-N-acetylglucosamine--N-acetylmuramyl-(pentapeptide) pyrophosphoryl-undecaprenol N-acetylglucosamine transferase, found in Bifidobacterium adolescentis (strain ATCC 15703 / DSM 20083 / NCTC 11814 / E194a).